The following is a 464-amino-acid chain: ATP-dependent protease ATPase subunit HslU (464 aa).

ATP is bound by residues I19, 61 to 66 (GVGKTE), D277, E342, and R414.

Belongs to the ClpX chaperone family. HslU subfamily. A double ring-shaped homohexamer of HslV is capped on each side by a ring-shaped HslU homohexamer. The assembly of the HslU/HslV complex is dependent on binding of ATP.

The protein resides in the cytoplasm. Its function is as follows. ATPase subunit of a proteasome-like degradation complex; this subunit has chaperone activity. The binding of ATP and its subsequent hydrolysis by HslU are essential for unfolding of protein substrates subsequently hydrolyzed by HslV. HslU recognizes the N-terminal part of its protein substrates and unfolds these before they are guided to HslV for hydrolysis. The polypeptide is ATP-dependent protease ATPase subunit HslU (Lactobacillus johnsonii (strain CNCM I-12250 / La1 / NCC 533)).